The primary structure comprises 206 residues: Proteasome subunit beta 2 (206 aa).

Residues 1–10 (MLHLKEKLKG) constitute a propeptide, removed in mature form; by autocatalysis. Threonine 11 (nucleophile) is an active-site residue.

It belongs to the peptidase T1B family. As to quaternary structure, the 20S proteasome core is composed of 14 alpha and 14 beta subunits that assemble into four stacked heptameric rings, resulting in a barrel-shaped structure. The two inner rings, each composed of seven catalytic beta subunits, are sandwiched by two outer rings, each composed of seven alpha subunits. The catalytic chamber with the active sites is on the inside of the barrel. Has a gated structure, the ends of the cylinder being occluded by the N-termini of the alpha-subunits. Is capped at one or both ends by the proteasome regulatory ATPase, PAN.

It localises to the cytoplasm. It carries out the reaction Cleavage of peptide bonds with very broad specificity.. With respect to regulation, the formation of the proteasomal ATPase PAN-20S proteasome complex, via the docking of the C-termini of PAN into the intersubunit pockets in the alpha-rings, triggers opening of the gate for substrate entry. Interconversion between the open-gate and close-gate conformations leads to a dynamic regulation of the 20S proteasome proteolysis activity. Functionally, component of the proteasome core, a large protease complex with broad specificity involved in protein degradation. In Pyrococcus furiosus (strain ATCC 43587 / DSM 3638 / JCM 8422 / Vc1), this protein is Proteasome subunit beta 2.